The following is a 1009-amino-acid chain: Glutamate receptor ionotropic, delta-2 (1009 aa).

A signal peptide spans 1 to 23; the sequence is MKVFPAVLFLITFWSLEWEPVLP. At 24 to 566 the chain is on the extracellular side; that stretch reads DSIIHIGAIF…DMFACLAPFD (543 aa). Residues N293, N306, N390, and N426 are each glycosylated (N-linked (GlcNAc...) asparagine). The Ca(2+) site is built by E531, V534, and D535. A helical transmembrane segment spans residues 567–587; the sequence is LSLWACIAGTVLLVGTLVYLL. Residues 588–635 are Cytoplasmic-facing; it reads NWLNPPRLPMGSVSSTTLYNSMWFVYGSFVQQGGEVPYTTLATRMMMG. The helical transmembrane segment at 636 to 656 threads the bilayer; that stretch reads VWWLFALIVISSYTANLAAFL. The Extracellular segment spans residues 657–830; that stretch reads TISRIENSIQ…KSGSALDIHS (174 aa). The N-linked (GlcNAc...) asparagine glycan is linked to N713. Ca(2+) is bound by residues D753, D755, and S757. A helical membrane pass occupies residues 831 to 851; sequence FAGVFFVLAAGVVLSCLIATV. Residues 852 to 1009 lie on the Cytoplasmic side of the membrane; it reads ETWWTRRKGS…GNDPDRGTSI (158 aa). Positions 989–1009 are disordered; sequence YQPTPAPNFSYGNDPDRGTSI.

It belongs to the glutamate-gated ion channel (TC 1.A.10.1) family. GRID2 subfamily. As to quaternary structure, tetramer; dimer of dimers. Expressed in cerebellar Purkinje cells, in crest cells in the medial octavolateral nucleus and in type I neurons of the optic tectum.

It localises to the postsynaptic cell membrane. It catalyses the reaction Ca(2+)(in) = Ca(2+)(out). The catalysed reaction is Na(+)(in) = Na(+)(out). In terms of biological role, member of the ionotropic glutamate receptor family, which plays a crucial role in synaptic organization and signal transduction in the central nervous system. Although it shares structural features with ionotropic glutamate receptors, does not bind glutamate as a primary ligand. Promotes synaptogenesis and mediates the D-Serine-dependent long term depression signals and AMPA receptor endocytosis of cerebellar parallel fiber-Purkinje cell (PF-PC) synapses through the NRX1B-CBLN1-GRID2 triad complex. In the presence of neurexins and cerebellins, forms cation-selective channels that are proposed to be gated by glycine and D-serine. However, recent research disputes this ligand-gated cation channel activity. Cation-selective ion channel activity can be triggered by GRM1 in Purkinje cells. The chain is Glutamate receptor ionotropic, delta-2 from Danio rerio (Zebrafish).